A 1220-amino-acid polypeptide reads, in one-letter code: Myosin-2 (1220 aa).

Polar residues predominate over residues 1 to 12; the sequence is MMLSASPNTLAK. Disordered regions lie at residues 1–54 and 68–95; these read MMLS…ARRS and QNGSVVSVTPAVEAESERKEEGVKRKEK. The span at 20 to 33 shows a compositional bias: basic and acidic residues; it reads ESLRQKDECDRPKD. Low complexity predominate over residues 40-54; sequence SRPNSRARLPSARRS. A compositionally biased stretch (basic and acidic residues) spans 82–95; that stretch reads ESERKEEGVKRKEK. In terms of domain architecture, Myosin N-terminal SH3-like spans 160 to 209; it reads KKKLRVWCRVSNGQWQLGKIQSTSADTSLVMLSTANVVKVSTEELFPANP. The Myosin motor domain maps to 213–879; it reads EGVEDLIQLS…QIGIFEDRRK (667 aa). ATP contacts are provided by residues 304-311 and 353-361; these read GESGAGKT and NANSSRFGK. Actin-binding stretches follow at residues 638-672 and 759-781; these read LIEKKPIGLLSLLDEESNFPKATDLTFANKLKQHL and LFKLMNKLENTSPHFIRCIKPNS. 3 consecutive IQ domains span residues 881 to 910, 904 to 933, and 942 to 971; these read VLQGIVGLQKHFRGHLSRAYFQNMRKVTLV, MRKVTLVLQSYIRGENARRLFDTEAKFHAD, and ELSAVIHLQSAVRGWLARKHFNSMQRQKEL. Disordered regions lie at residues 968-1007 and 1075-1118; these read QKELRNVATKSKRKAGRRISEDKDIPLEQPQVQPTSMSDL and SITG…NGNT. Polar residues-rich tracts occupy residues 997–1006 and 1098–1118; these read PQVQPTSMSD and TMSTGTPGVRTPTNKFTNGNT. Residues 1003–1071 are a coiled coil; that stretch reads SMSDLQKRIL…MSLAAARKSL (69 aa).

It belongs to the TRAFAC class myosin-kinesin ATPase superfamily. Myosin family. Plant myosin class VIII subfamily. Homodimer. Expressed in flowers, leaves and roots.

It localises to the cell junction. The protein resides in the plasmodesma. It is found in the endosome. Myosin heavy chain that is required for the cell cycle-regulated transport of various organelles and proteins for their segregation. Functions by binding with its tail domain to receptor proteins on organelles and exerting force with its N-terminal motor domain against actin filaments, thereby transporting its cargo along polarized actin cables. Involved in endocytosis via its action in endosomal trafficking. This chain is Myosin-2 (VIII-2), found in Arabidopsis thaliana (Mouse-ear cress).